The primary structure comprises 571 residues: MSFKMTQSQYTSLYGPTIGDAIRLGDTNLFATIEKDFANYGDEATFGGGKSVRDGMAQNPNVTRDDRYVADTVITNAVIIDYDKVYKADLGIKNGYIMKYGKAGNPDIMDDVDIIIGASTDIISGEGKIVTAGGIDTHVHFINPEQAYVALESGVTTHIGGGTGASEGAKATTVAPGPWHIHRMLEAAEGLPINVGFTGKGQAHNHTALIEQIHAGAIGLKVHEDWGATPSALSHALDVADDYDVQIALHADTLNEAGFMEDTMKAIKDRVIHMYHTEGAGGGHAPDLIKSASYPNVLPSSTNPTLPYTVNTIDEHLDMVMITHHLNASIPEDIAFADSRIRKETIAAEDVLQDMGVFSMVSSDSQAMDRVGEVITRTWQVAHRMKEQRGYLDGDKEYNDNNRIKRYIAKYTINPAITHGISEYVGSIEEGKLADLVIWDPAFFGVKPEMILKAGMINTAVNGDANGSIPTSEPLKYRKMYGQYGGNLTGTSITFVSNIAYMNDIERQLSLHRMVRPVKGIRQLTKKDMKNNSETPKLDVDPQTYEVFVDGKLITSEPAKELPLAQRYFLF.

The Urease domain maps to 133 to 571 (GGIDTHVHFI…LPLAQRYFLF (439 aa)). Residues His138, His140, and Lys221 each coordinate Ni(2+). An N6-carboxylysine modification is found at Lys221. His223 contacts substrate. Ni(2+) is bound by residues His250 and His276. The active-site Proton donor is His324. Asp364 is a Ni(2+) binding site.

Belongs to the metallo-dependent hydrolases superfamily. Urease alpha subunit family. As to quaternary structure, heterotrimer of UreA (gamma), UreB (beta) and UreC (alpha) subunits. Three heterotrimers associate to form the active enzyme. Ni cation serves as cofactor. Post-translationally, carboxylation allows a single lysine to coordinate two nickel ions.

It is found in the cytoplasm. It carries out the reaction urea + 2 H2O + H(+) = hydrogencarbonate + 2 NH4(+). The protein operates within nitrogen metabolism; urea degradation; CO(2) and NH(3) from urea (urease route): step 1/1. The polypeptide is Urease subunit alpha (Staphylococcus carnosus (strain TM300)).